The chain runs to 97 residues: Small ribosomal subunit protein bS20 (97 aa).

The protein belongs to the bacterial ribosomal protein bS20 family.

Binds directly to 16S ribosomal RNA. In Prochlorococcus marinus (strain MIT 9301), this protein is Small ribosomal subunit protein bS20.